We begin with the raw amino-acid sequence, 310 residues long: tRNA dimethylallyltransferase (310 aa).

Gly-13–Thr-20 is an ATP binding site. Thr-15 to Thr-20 serves as a coordination point for substrate. 4 interaction with substrate tRNA regions span residues Asp-38–Leu-41, Gln-162–Arg-166, Arg-243–Arg-248, and Lys-276–Arg-283.

This sequence belongs to the IPP transferase family. Monomer. Requires Mg(2+) as cofactor.

It carries out the reaction adenosine(37) in tRNA + dimethylallyl diphosphate = N(6)-dimethylallyladenosine(37) in tRNA + diphosphate. Functionally, catalyzes the transfer of a dimethylallyl group onto the adenine at position 37 in tRNAs that read codons beginning with uridine, leading to the formation of N6-(dimethylallyl)adenosine (i(6)A). This Vibrio atlanticus (strain LGP32) (Vibrio splendidus (strain Mel32)) protein is tRNA dimethylallyltransferase.